We begin with the raw amino-acid sequence, 133 residues long: Brain natriuretic peptide (133 aa).

Positions 1–22 (MVVSFVSICGLLLIFNLPLSTS) are cleaved as a signal peptide. Residues 44–53 (SMSEETEEDQ) show a composition bias toward acidic residues. Disordered stretches follow at residues 44 to 76 (SMSEETEEDQMVPANSESLEPVGSMKQTANRDQ) and 93 to 112 (TRKNVQNDSSRRSSSCFGRR). Cys-108 and Cys-124 are disulfide-bonded.

This sequence belongs to the natriuretic peptide family.

The protein localises to the secreted. Cardiac hormone which may function as a paracrine antifibrotic factor in the heart. Also plays a key role in cardiovascular homeostasis through natriuresis, diuresis, vasorelaxation, and inhibition of renin and aldosterone secretion. Has a cGMP-stimulating activity. The sequence is that of Brain natriuretic peptide (nppb) from Takifugu rubripes (Japanese pufferfish).